We begin with the raw amino-acid sequence, 194 residues long: ATP-dependent Clp protease proteolytic subunit (194 aa).

The active-site Nucleophile is Ser98. The active site involves His123.

It belongs to the peptidase S14 family. As to quaternary structure, fourteen ClpP subunits assemble into 2 heptameric rings which stack back to back to give a disk-like structure with a central cavity, resembling the structure of eukaryotic proteasomes.

It localises to the cytoplasm. The catalysed reaction is Hydrolysis of proteins to small peptides in the presence of ATP and magnesium. alpha-casein is the usual test substrate. In the absence of ATP, only oligopeptides shorter than five residues are hydrolyzed (such as succinyl-Leu-Tyr-|-NHMec, and Leu-Tyr-Leu-|-Tyr-Trp, in which cleavage of the -Tyr-|-Leu- and -Tyr-|-Trp bonds also occurs).. Functionally, cleaves peptides in various proteins in a process that requires ATP hydrolysis. Has a chymotrypsin-like activity. Plays a major role in the degradation of misfolded proteins. The sequence is that of ATP-dependent Clp protease proteolytic subunit from Acetivibrio thermocellus (strain ATCC 27405 / DSM 1237 / JCM 9322 / NBRC 103400 / NCIMB 10682 / NRRL B-4536 / VPI 7372) (Clostridium thermocellum).